Consider the following 245-residue polypeptide: MKFLGIIPARYSSTRLEGKPLKMIEGHTMIEWVYKRAKKSNLDSLIVATDDERIYNEVINFGGQAIMTSKNHTNGTSRIAEVCEKMTEYDTIINIQGDEPLIEYEMINSLIETFKENKDLKMATLKHKLLNKEEIKNPNNVKVVCDKNDYAIYFSRSVIPYPRKNGNISYFKHIGIYGYKRDFVIEYSKMLATPLEEIESLEQLRVLENGYKIKVLETTHSLIGVDTQENLEQVINYIKENNIKI.

The protein belongs to the KdsB family.

The protein resides in the cytoplasm. It catalyses the reaction 3-deoxy-alpha-D-manno-oct-2-ulosonate + CTP = CMP-3-deoxy-beta-D-manno-octulosonate + diphosphate. It functions in the pathway nucleotide-sugar biosynthesis; CMP-3-deoxy-D-manno-octulosonate biosynthesis; CMP-3-deoxy-D-manno-octulosonate from 3-deoxy-D-manno-octulosonate and CTP: step 1/1. It participates in bacterial outer membrane biogenesis; lipopolysaccharide biosynthesis. Activates KDO (a required 8-carbon sugar) for incorporation into bacterial lipopolysaccharide in Gram-negative bacteria. The sequence is that of 3-deoxy-manno-octulosonate cytidylyltransferase from Fusobacterium nucleatum subsp. nucleatum (strain ATCC 25586 / DSM 15643 / BCRC 10681 / CIP 101130 / JCM 8532 / KCTC 2640 / LMG 13131 / VPI 4355).